The sequence spans 326 residues: Meso-diaminopimelate D-dehydrogenase (326 aa).

Residues Tyr11–Leu14, Thr35–Arg37, Cys69–Ser72, Ser92–Asp94, and Val121–Pro125 contribute to the NADP(+) site. Substrate is bound by residues Asp94, Asp124, Trp148, Gln154–Gly155, Thr173, Arg199, His249, and Asn276.

The protein belongs to the diaminopimelate dehydrogenase family. In terms of assembly, homodimer.

It carries out the reaction meso-2,6-diaminopimelate + NADP(+) + H2O = (S)-2-amino-6-oxoheptanedioate + NH4(+) + NADPH + H(+). Its pathway is amino-acid biosynthesis; L-lysine biosynthesis via DAP pathway; DL-2,6-diaminopimelate from (S)-tetrahydrodipicolinate: step 1/1. With respect to regulation, the enzyme is completely inhibited by p-chloromercuribenzoate and HgCl(2) in vitro. Thioglycollate, L-cysteine and Cu(2+) also strongly inhibit the enzyme. Functionally, catalyzes the reversible NADPH-dependent reductive amination of L-2-amino-6-oxopimelate, the acyclic form of L-tetrahydrodipicolinate, to generate the meso compound, D,L-2,6-diaminopimelate. Probably plays a role in lysine biosynthesis. Is highly specific for meso-2,6-diaminopimelate as the electron donor, since the following amino acids are inert for the oxidative deamination reaction: DL-2-aminopimelate, D-glutamate, L-glutamate, D-aspartate, L-aspartate, D-alanine, L-alanine, D-valine, L-valine, D-lysine, L-lysine, D-phenylalanine, L-phenylalanine, D-leucine, L-leucine, D-threonine, L-threonine, D-serine, L-serine, D-tryptophan, L-tryptophan, D-cysteine, L-cysteine, D-histidine, L-histidine, D-methionine, D-arginine, D-proline, D-asparagine, D-glutamine, D-isoleucine and D-ornithine. Moreover, exclusively uses NADP as the electron acceptor for the oxidative deamination of meso-DAP; NAD is inert. This is Meso-diaminopimelate D-dehydrogenase (ddh) from Ureibacillus thermosphaericus.